The sequence spans 353 residues: sn-glycerol-3-phosphate import ATP-binding protein UgpC (353 aa).

Residues 4–234 (ILLNDVRKSY…PASEFVAGFI (231 aa)) enclose the ABC transporter domain. Position 36–43 (36–43 (GPSGCGKS)) interacts with ATP.

It belongs to the ABC transporter superfamily. sn-glycerol-3-phosphate importer (TC 3.A.1.1.3) family. In terms of assembly, the complex is composed of two ATP-binding proteins (UgpC), two transmembrane proteins (UgpA and UgpE) and a solute-binding protein (UgpB).

The protein resides in the cell inner membrane. The enzyme catalyses sn-glycerol 3-phosphate(out) + ATP + H2O = sn-glycerol 3-phosphate(in) + ADP + phosphate + H(+). Part of the ABC transporter complex UgpBAEC involved in sn-glycerol-3-phosphate (G3P) import. Responsible for energy coupling to the transport system. This chain is sn-glycerol-3-phosphate import ATP-binding protein UgpC, found in Paracoccus denitrificans (strain Pd 1222).